A 401-amino-acid chain; its full sequence is Type 3 secretion system translocon protein SctE (401 aa).

Positions 129 to 160 form a coiled coil; it reads IQRLHEQNMKKIEENQEKIKETEENAKQVKKS. A run of 2 helical transmembrane segments spans residues 166 to 186 and 225 to 245; these read IFGW…VASG and LGPI…VMTF. The stretch at 345–379 forms a coiled coil; the sequence is LALNKADMAALQSIIDRLKEELSHLSESHRQVMEL.

This sequence belongs to the SctE/SipB/YopB family. The core secretion machinery of the T3SS is composed of approximately 20 different proteins, including cytoplasmic components, a base, an export apparatus and a needle. This subunit is involved in the formation of a pore, called the translocon, in host membrane. Interacts with YopD/SctB. Together with YopD/SctB, forms a multimeric integral membrane complex with a mass of between 500 and 700 kDa.

The protein localises to the secreted. It localises to the host membrane. Its function is as follows. Component of the type III secretion system (T3SS), also called injectisome, which is used to inject bacterial effector proteins into eukaryotic host cells. YopB/SctE and YopD/SctB are inserted into the host membrane where they form a pore and allow the translocation of effector proteins into the cytosol of target cells. Is an essential virulence determinant. Required for YopE translocation. In terms of biological role, essential for the establishment of Yersinia infections in a mouse model system, but not for the targeting of effector Yops. May modulate the host's immune response at a distance from the site of infection. This chain is Type 3 secretion system translocon protein SctE, found in Yersinia enterocolitica.